Consider the following 225-residue polypeptide: GTP cyclohydrolase 1 (225 aa).

The span at 1-12 shows a compositional bias: basic and acidic residues; that stretch reads MERSKQSHDNQA. The interval 1–59 is disordered; sequence MERSKQSHDNQADSRPTTNESSLNGHFDGLVKKTPGMWDVKGRGTAGESSSHTGSSVVE. Composition is skewed to polar residues over residues 13-24 and 47-58; these read DSRPTTNESSLN and GESSSHTGSSVV. 3 residues coordinate Zn(2+): Cys-149, His-152, and Cys-220.

This sequence belongs to the GTP cyclohydrolase I family. Toroid-shaped homodecamer, composed of two pentamers of five dimers.

It localises to the cytoplasm. Its subcellular location is the nucleus. It carries out the reaction GTP + H2O = 7,8-dihydroneopterin 3'-triphosphate + formate + H(+). It participates in cofactor biosynthesis; 7,8-dihydroneopterin triphosphate biosynthesis; 7,8-dihydroneopterin triphosphate from GTP: step 1/1. GTP shows a positive allosteric effect, and tetrahydrobiopterin inhibits the enzyme activity. Zinc is required for catalytic activity. Inhibited by Mg(2+). Its function is as follows. May positively regulate nitric oxide synthesis in endothelial cells. May be involved in dopamine synthesis. May modify pain sensitivity and persistence. The sequence is that of GTP cyclohydrolase 1 (gch1) from Oncorhynchus mykiss (Rainbow trout).